We begin with the raw amino-acid sequence, 144 residues long: Large ribosomal subunit protein uL11 (144 aa).

The protein belongs to the universal ribosomal protein uL11 family. Part of the ribosomal stalk of the 50S ribosomal subunit. Interacts with L10 and the large rRNA to form the base of the stalk. L10 forms an elongated spine to which L12 dimers bind in a sequential fashion forming a multimeric L10(L12)X complex. One or more lysine residues are methylated.

Functionally, forms part of the ribosomal stalk which helps the ribosome interact with GTP-bound translation factors. This Gluconobacter oxydans (strain 621H) (Gluconobacter suboxydans) protein is Large ribosomal subunit protein uL11.